A 491-amino-acid polypeptide reads, in one-letter code: Glutamyl-tRNA(Gln) amidotransferase subunit A (491 aa).

Active-site charge relay system residues include lysine 77 and serine 152. Residue serine 176 is the Acyl-ester intermediate of the active site.

This sequence belongs to the amidase family. GatA subfamily. Heterotrimer of A, B and C subunits.

It catalyses the reaction L-glutamyl-tRNA(Gln) + L-glutamine + ATP + H2O = L-glutaminyl-tRNA(Gln) + L-glutamate + ADP + phosphate + H(+). Its function is as follows. Allows the formation of correctly charged Gln-tRNA(Gln) through the transamidation of misacylated Glu-tRNA(Gln) in organisms which lack glutaminyl-tRNA synthetase. The reaction takes place in the presence of glutamine and ATP through an activated gamma-phospho-Glu-tRNA(Gln). This is Glutamyl-tRNA(Gln) amidotransferase subunit A from Chlamydia felis (strain Fe/C-56) (Chlamydophila felis).